A 121-amino-acid chain; its full sequence is Small ribosomal subunit protein uS13 (121 aa).

Positions Arg-93–Lys-121 are disordered.

This sequence belongs to the universal ribosomal protein uS13 family. As to quaternary structure, part of the 30S ribosomal subunit. Forms a loose heterodimer with protein S19. Forms two bridges to the 50S subunit in the 70S ribosome.

In terms of biological role, located at the top of the head of the 30S subunit, it contacts several helices of the 16S rRNA. In the 70S ribosome it contacts the 23S rRNA (bridge B1a) and protein L5 of the 50S subunit (bridge B1b), connecting the 2 subunits; these bridges are implicated in subunit movement. Contacts the tRNAs in the A and P-sites. This chain is Small ribosomal subunit protein uS13, found in Ligilactobacillus salivarius (strain UCC118) (Lactobacillus salivarius).